Consider the following 364-residue polypeptide: CCA-adding enzyme (364 aa).

ATP-binding residues include glycine 19 and arginine 22. The CTP site is built by glycine 19 and arginine 22. 2 residues coordinate Mg(2+): aspartate 32 and aspartate 34. Positions 102, 148, and 151 each coordinate ATP. The CTP site is built by arginine 102, arginine 148, and arginine 151.

It belongs to the tRNA nucleotidyltransferase/poly(A) polymerase family. Bacterial CCA-adding enzyme type 2 subfamily. Mg(2+) is required as a cofactor.

The catalysed reaction is a tRNA precursor + 2 CTP + ATP = a tRNA with a 3' CCA end + 3 diphosphate. It catalyses the reaction a tRNA with a 3' CCA end + 2 CTP + ATP = a tRNA with a 3' CCACCA end + 3 diphosphate. Its function is as follows. Catalyzes the addition and repair of the essential 3'-terminal CCA sequence in tRNAs without using a nucleic acid template. Adds these three nucleotides in the order of C, C, and A to the tRNA nucleotide-73, using CTP and ATP as substrates and producing inorganic pyrophosphate. tRNA 3'-terminal CCA addition is required both for tRNA processing and repair. Also involved in tRNA surveillance by mediating tandem CCA addition to generate a CCACCA at the 3' terminus of unstable tRNAs. While stable tRNAs receive only 3'-terminal CCA, unstable tRNAs are marked with CCACCA and rapidly degraded. This chain is CCA-adding enzyme, found in Bordetella bronchiseptica (strain ATCC BAA-588 / NCTC 13252 / RB50) (Alcaligenes bronchisepticus).